Here is a 367-residue protein sequence, read N- to C-terminus: Peroxisome biogenesis protein 16 (367 aa).

The tract at residues 135-173 is disordered; it reads GGETPNEEKDSNQSESQNRAGNSGRNLGPHGLGNQNHHN. Residues 147 to 159 show a composition bias toward polar residues; that stretch reads QSESQNRAGNSGR. 2 helical membrane-spanning segments follow: residues 237 to 257 and 264 to 284; these read ALFA…VLFI and SWIP…LLAN.

Belongs to the peroxin-16 family. Interacts with APEM9 (via both N- and C-terminus). In terms of processing, the detection of an additional immunorelated polypeptide of 52 kDa suggests a post-translational modification of PEX16. Expressed in roots, siliques, seeds, cotyledons, leaves and flowers. Low expression in leaves and roots.

It is found in the peroxisome membrane. The protein localises to the endoplasmic reticulum membrane. In terms of biological role, involved in the formation of peroxisomes, lipid bodies and protein bodies. This chain is Peroxisome biogenesis protein 16, found in Arabidopsis thaliana (Mouse-ear cress).